A 340-amino-acid polypeptide reads, in one-letter code: DNA-directed RNA polymerase subunit alpha (340 aa).

An alpha N-terminal domain (alpha-NTD) region spans residues 1–233 (MIQDEIKVST…DLFIPLINSE (233 aa)). An alpha C-terminal domain (alpha-CTD) region spans residues 265-340 (TKDVAFKHIF…IQLPKNKNYL (76 aa)).

It belongs to the RNA polymerase alpha chain family. In plastids the minimal PEP RNA polymerase catalytic core is composed of four subunits: alpha, beta, beta', and beta''. When a (nuclear-encoded) sigma factor is associated with the core the holoenzyme is formed, which can initiate transcription.

The protein localises to the plastid. It localises to the chloroplast. It catalyses the reaction RNA(n) + a ribonucleoside 5'-triphosphate = RNA(n+1) + diphosphate. Its function is as follows. DNA-dependent RNA polymerase catalyzes the transcription of DNA into RNA using the four ribonucleoside triphosphates as substrates. The polypeptide is DNA-directed RNA polymerase subunit alpha (Marchantia polymorpha (Common liverwort)).